The following is a 136-amino-acid chain: Selenoprotein M (136 aa).

A signal peptide spans 1–19 (MWLPLPLLLGLLQLQPILS). Active-site nucleophile residues include cysteine 38 and selenocysteine 41. The segment at residues 38-41 (CGGU) is a cross-link (cysteinyl-selenocysteine (Cys-Sec)). Selenocysteine 41 is a non-standard amino acid (selenocysteine). Residues 111 to 136 (SSPDAPVPAEFKMAPARASGDTKEDL) form a disordered region. Residues 133-136 (KEDL) carry the Prevents secretion from ER motif.

The protein belongs to the selenoprotein M/F family.

The protein resides in the endoplasmic reticulum. May function as a thiol-disulfide oxidoreductase that participates in disulfide bond formation. In Xenopus laevis (African clawed frog), this protein is Selenoprotein M (selenom).